The sequence spans 1165 residues: Chromosome partition protein Smc (1165 aa).

32 to 39 (PNGSGKSN) lines the ATP pocket. Positions 161–503 (AGVAEFDRKI…ETQRQVWREA (343 aa)) form a coiled coil. An SMC hinge domain is found at 518–630 (QGVHGLISQL…VFRSLELARR (113 aa)). Coiled coils occupy residues 672-901 (ELAE…LQQR) and 946-1010 (DLSL…DCDT).

This sequence belongs to the SMC family. In terms of assembly, homodimer.

The protein localises to the cytoplasm. Functionally, required for chromosome condensation and partitioning. The polypeptide is Chromosome partition protein Smc (Gloeobacter violaceus (strain ATCC 29082 / PCC 7421)).